The chain runs to 101 residues: Urease subunit beta (101 aa).

Belongs to the urease beta subunit family. As to quaternary structure, heterotrimer of UreA (gamma), UreB (beta) and UreC (alpha) subunits. Three heterotrimers associate to form the active enzyme.

It localises to the cytoplasm. The enzyme catalyses urea + 2 H2O + H(+) = hydrogencarbonate + 2 NH4(+). The protein operates within nitrogen metabolism; urea degradation; CO(2) and NH(3) from urea (urease route): step 1/1. The polypeptide is Urease subunit beta (Pseudomonas syringae pv. syringae (strain B728a)).